A 478-amino-acid chain; its full sequence is Dihydrolipoyl dehydrogenase (478 aa).

FAD contacts are provided by residues 34-49 (EKYI…GGTC), lysine 58, and glycine 122. Residues cysteine 49 and cysteine 54 are joined by a disulfide bond. NAD(+)-binding positions include 188-192 (GAGVI), glutamate 211, valine 245, and 276-279 (AVGR). FAD-binding residues include aspartate 319 and alanine 327. The active-site Proton acceptor is histidine 451.

Belongs to the class-I pyridine nucleotide-disulfide oxidoreductase family. As to quaternary structure, homodimer. It depends on FAD as a cofactor.

It localises to the cytoplasm. The enzyme catalyses N(6)-[(R)-dihydrolipoyl]-L-lysyl-[protein] + NAD(+) = N(6)-[(R)-lipoyl]-L-lysyl-[protein] + NADH + H(+). The branched-chain alpha-keto dehydrogenase complex catalyzes the overall conversion of alpha-keto acids to acyl-CoA and CO(2). It contains multiple copies of 3 enzymatic components: branched-chain alpha-keto acid decarboxylase (E1), lipoamide acyltransferase (E2) and lipoamide dehydrogenase (E3). This Pseudomonas fluorescens protein is Dihydrolipoyl dehydrogenase (lpd).